The chain runs to 1234 residues: MRLDSFPASISVPYEVRSGFQAQGGLPSPSGHTSLRVSVFDSCFCTEVLPHGMYPVYLTGILTDLHEEHSQSSFLGINFRDGDKRSQLADVLREYNVPVIDYPRHFEGCPVLPLSLIQHFLRVCEHWLSTGNNQNIILLHCERGGWPSLAFMLSCLLIFKKLQSAEHKTLDLIYREAPKGFLQLFSALNPMPSQLRYLQYVARRNISPEWPPMERALSFDCLILRAIPSFDSDNGCRPLVRIFGRNIIGKNASTSNMIFSMPKKKTLRHYRQEDCDVIKIDIQCPVQGDVVLECVHLDLDPEKEVMMFRIMFNTAFIRSNVLMLNSDDIDIVWGSKDQYPRNFRAEMLFCELGGISPARPPTATLNGDMKGGLPIEAFSAVQELFNGVDWMESSDNAAFWLLKEFSANSLQEKFQKLILSDMEELSKFQAKVGLQIPLMSPLDSDEEKYSVASDSVSSSEHEKVQPGGNSSDSENINHDLTTEDTASMGNVLVNTPSVLPPTTPPPCGSLSILSTDENQLPPEVQHESPSDRKLPSPSPTAAAPPPPPPPPPPPSGNKPAFSPPPPPPPPPPPPLPQSNYASSQPPPPPPPPPLPNCLVPSPPPPPPPPPILPNRSVPPPPPPPPPLPNHSVLPPPPPPPPPPSLPNRLVPPPPAPGIGNKFPAPPPPPPPPRSSSRTPTGAATSSKGPPPPPPPPLPPANRTNGPGVPSAPPPPPPPPPANRSNGPSAPAPPLPPPLPAAANKRNPPAPPPPPLMTGKKAPAPPPPPPQAPKPPGTVPPPPPLHGASGRPHPPSSKGLNAPAPPPLLGRGREATGSAKGRGIGLAQQSNPPKKASLKPLHWVKVTRAMQGSLWEDAQKQGNQARAPDIDLSELESLFSTAVATNASEKGGTKRGSAISKPEIVHLVDMRRANNCEIMLTKIKMPLPDMINAILALDTSVLDNDQVENLIKFCPTKEEIEMLKNYNGNKEMLGKCEQFFLELMKVPRVESKLRVFAFRITFSTQVEELRTNLTTINDATKEVKESLKLRQIMQTILTLGNALNQGTARGSAVGFRLDSLLKLSDTRARNNKMTLMHYLCKLLSEKLPELLDFDKDLIHLEAASKIQLKLLAEEMQAINKGLEKVEQELAASVNDGAISVGFREALKSFLDAAEAEVRSLISLYSEVGRNADSLAQYFGEDPARCPFEQVTSILVIFVNMFKKSRDENARTAELEKKKLEKDKEKATLSAKKVLE.

The Phosphatase tensin-type domain maps to 1 to 208; the sequence is MRLDSFPASI…QYVARRNISP (208 aa). Residue C141 is the Phosphocysteine intermediate of the active site. The region spanning 214 to 352 is the C2 tensin-type domain; sequence ERALSFDCLI…FRAEMLFCEL (139 aa). Disordered regions lie at residues 443 to 478 and 492 to 840; these read DSDE…NINH and LVNT…LKPL. Residues 498–507 are compositionally biased toward pro residues; sequence VLPPTTPPPC. Residues 524 to 534 show a composition bias toward basic and acidic residues; it reads VQHESPSDRKL. 7 stretches are compositionally biased toward pro residues: residues 536–576, 584–656, 663–673, 688–699, 709–721, 729–739, and 762–784; these read SPSP…PPLP, QPPP…PPAP, PAPPPPPPPPR, GPPPPPPPPLPP, PSAP…PPPA, APAPPLPPPLP, and PAPP…PPPL. In terms of domain architecture, FH2 spans 827 to 1226; the sequence is QQSNPPKKAS…KLEKDKEKAT (400 aa).

This sequence belongs to the formin-like family. Class-II subfamily.

In Oryza sativa subsp. japonica (Rice), this protein is Formin-like protein 3 (FH3).